The following is a 325-amino-acid chain: Tetraacyldisaccharide 4'-kinase (325 aa).

55–62 contributes to the ATP binding site; the sequence is TAGGNGKT.

Belongs to the LpxK family.

It carries out the reaction a lipid A disaccharide + ATP = a lipid IVA + ADP + H(+). Its pathway is glycolipid biosynthesis; lipid IV(A) biosynthesis; lipid IV(A) from (3R)-3-hydroxytetradecanoyl-[acyl-carrier-protein] and UDP-N-acetyl-alpha-D-glucosamine: step 6/6. Transfers the gamma-phosphate of ATP to the 4'-position of a tetraacyldisaccharide 1-phosphate intermediate (termed DS-1-P) to form tetraacyldisaccharide 1,4'-bis-phosphate (lipid IVA). The chain is Tetraacyldisaccharide 4'-kinase from Salmonella dublin (strain CT_02021853).